Consider the following 379-residue polypeptide: MIISSSTDYRRAAQKRLPPFLFHYIDGGAYAEHTLRRNVDDLAEVALRQRVLKDMSQLDTSIDLFGEKLSMPVALSPVGLTGMYARRGEVQAARAADARGIPFTMSSVSVCPIEEVAPRLSRPMWFQLYVLKDRGFMRNALERAQAAGCSTLVFTVDMPVPGARYRDAHSGMSGPNAALRRYAQAVMHPRWAWDVGLLGRPHDLGNISRYLGKPTGLEDYMGYLGANFDPSISWKDLEWIREFWKGPMLIKGILDPDDARDAVRFGADGIIVSNHGGRQLDGVLSSARALPAIADAVKGQIKILADSGIRSGLDVVRMIALGADAAMLGRAYIYALAAAGQSGVDHLLGLIEKEIRVAMTLTSVSSISQITSELLVREP.

Positions 1-379 (MIISSSTDYR…ITSELLVREP (379 aa)) constitute an FMN hydroxy acid dehydrogenase domain. A substrate-binding site is contributed by Tyr-24. Residues Ser-106 and Gln-127 each coordinate FMN. Tyr-129 provides a ligand contact to substrate. Residue Thr-155 participates in FMN binding. Position 164 (Arg-164) interacts with substrate. Residue Lys-251 coordinates FMN. The active-site Proton acceptor is the His-275. Residue Arg-278 participates in substrate binding. 306–330 (DSGIRSGLDVVRMIALGADAAMLGR) provides a ligand contact to FMN.

The protein belongs to the FMN-dependent alpha-hydroxy acid dehydrogenase family. FMN serves as cofactor.

It localises to the cell membrane. It carries out the reaction (S)-lactate + A = pyruvate + AH2. Catalyzes the conversion of L-lactate to pyruvate. Is coupled to the respiratory chain. This is L-lactate dehydrogenase from Alcaligenes faecalis.